A 457-amino-acid polypeptide reads, in one-letter code: tRNA-2-methylthio-N(6)-dimethylallyladenosine synthase (457 aa).

An MTTase N-terminal domain is found at 19–134 (RKLFIETYGC…LPNLVGAVEH (116 aa)). [4Fe-4S] cluster contacts are provided by Cys-28, Cys-64, Cys-98, Cys-172, Cys-176, and Cys-179. In terms of domain architecture, Radical SAM core spans 158-390 (PGVHISGFVS…IDLQNKLSEE (233 aa)). In terms of domain architecture, TRAM spans 393–456 (LRDIGKTFEV…SATLFGEPVE (64 aa)).

This sequence belongs to the methylthiotransferase family. MiaB subfamily. As to quaternary structure, monomer. [4Fe-4S] cluster serves as cofactor.

The protein localises to the cytoplasm. It catalyses the reaction N(6)-dimethylallyladenosine(37) in tRNA + (sulfur carrier)-SH + AH2 + 2 S-adenosyl-L-methionine = 2-methylsulfanyl-N(6)-dimethylallyladenosine(37) in tRNA + (sulfur carrier)-H + 5'-deoxyadenosine + L-methionine + A + S-adenosyl-L-homocysteine + 2 H(+). Functionally, catalyzes the methylthiolation of N6-(dimethylallyl)adenosine (i(6)A), leading to the formation of 2-methylthio-N6-(dimethylallyl)adenosine (ms(2)i(6)A) at position 37 in tRNAs that read codons beginning with uridine. This Parabacteroides distasonis (strain ATCC 8503 / DSM 20701 / CIP 104284 / JCM 5825 / NCTC 11152) protein is tRNA-2-methylthio-N(6)-dimethylallyladenosine synthase.